We begin with the raw amino-acid sequence, 289 residues long: Formamidopyrimidine-DNA glycosylase (289 aa).

The active-site Schiff-base intermediate with DNA is P2. E3 acts as the Proton donor in catalysis. K61 acts as the Proton donor; for beta-elimination activity in catalysis. Positions 96, 115, and 161 each coordinate DNA. The segment at 247 to 281 (SAYGQENLPCPRCGAPIKREKFMNRSSFSCPRCQP) adopts an FPG-type zinc-finger fold. The active-site Proton donor; for delta-elimination activity is R271.

The protein belongs to the FPG family. In terms of assembly, monomer. It depends on Zn(2+) as a cofactor.

It carries out the reaction Hydrolysis of DNA containing ring-opened 7-methylguanine residues, releasing 2,6-diamino-4-hydroxy-5-(N-methyl)formamidopyrimidine.. It catalyses the reaction 2'-deoxyribonucleotide-(2'-deoxyribose 5'-phosphate)-2'-deoxyribonucleotide-DNA = a 3'-end 2'-deoxyribonucleotide-(2,3-dehydro-2,3-deoxyribose 5'-phosphate)-DNA + a 5'-end 5'-phospho-2'-deoxyribonucleoside-DNA + H(+). In terms of biological role, involved in base excision repair of DNA damaged by oxidation or by mutagenic agents. Acts as a DNA glycosylase that recognizes and removes damaged bases. Has a preference for oxidized purines, such as 7,8-dihydro-8-oxoguanine (8-oxoG). Has AP (apurinic/apyrimidinic) lyase activity and introduces nicks in the DNA strand. Cleaves the DNA backbone by beta-delta elimination to generate a single-strand break at the site of the removed base with both 3'- and 5'-phosphates. This chain is Formamidopyrimidine-DNA glycosylase, found in Rhodococcus erythropolis (strain PR4 / NBRC 100887).